The sequence spans 172 residues: Large ribosomal subunit protein bL21m (172 aa).

The transit peptide at 1–20 directs the protein to the mitochondrion; the sequence is MIRNIGSNLMKSSSSILLRN.

Belongs to the bacterial ribosomal protein bL21 family.

The protein localises to the mitochondrion. This Dictyostelium discoideum (Social amoeba) protein is Large ribosomal subunit protein bL21m (mrpl21).